Consider the following 339-residue polypeptide: Ferrochelatase (339 aa).

Fe cation contacts are provided by His-202 and Glu-283.

Belongs to the ferrochelatase family.

It localises to the cytoplasm. It carries out the reaction heme b + 2 H(+) = protoporphyrin IX + Fe(2+). It functions in the pathway porphyrin-containing compound metabolism; protoheme biosynthesis; protoheme from protoporphyrin-IX: step 1/1. Functionally, catalyzes the ferrous insertion into protoporphyrin IX. In Psychrobacter sp. (strain PRwf-1), this protein is Ferrochelatase.